A 93-amino-acid chain; its full sequence is Small ribosomal subunit protein uS19 (93 aa).

It belongs to the universal ribosomal protein uS19 family.

Functionally, protein S19 forms a complex with S13 that binds strongly to the 16S ribosomal RNA. The protein is Small ribosomal subunit protein uS19 of Syntrophus aciditrophicus (strain SB).